Reading from the N-terminus, the 39-residue chain is MWAAKLIVVTLLLLQFAALALSCSCGEEAKLECGCTKHH.

In terms of tissue distribution, in bundles of maturing sperm of larval, pupal and adult males.

This Drosophila melanogaster (Fruit fly) protein is Gonadal protein gdl-ORF39 (gdl-ORF39).